The sequence spans 294 residues: N-acetylmuramic acid 6-phosphate etherase (294 aa).

An SIS domain is found at 54 to 217; that stretch reads TIHSFKSNGR…STASMIGVGK (164 aa). Catalysis depends on E82, which acts as the Proton donor. E113 is an active-site residue.

Belongs to the GCKR-like family. MurNAc-6-P etherase subfamily. Homodimer.

It catalyses the reaction N-acetyl-D-muramate 6-phosphate + H2O = N-acetyl-D-glucosamine 6-phosphate + (R)-lactate. It participates in amino-sugar metabolism; N-acetylmuramate degradation. Its function is as follows. Specifically catalyzes the cleavage of the D-lactyl ether substituent of MurNAc 6-phosphate, producing GlcNAc 6-phosphate and D-lactate. The sequence is that of N-acetylmuramic acid 6-phosphate etherase from Oceanobacillus iheyensis (strain DSM 14371 / CIP 107618 / JCM 11309 / KCTC 3954 / HTE831).